We begin with the raw amino-acid sequence, 260 residues long: NAD kinase (260 aa).

Asp-49 serves as the catalytic Proton acceptor. NAD(+) is bound by residues 49-50 (DG), 119-120 (NE), Asp-149, Ala-157, and 160-165 (TAYNLS).

The protein belongs to the NAD kinase family. Requires a divalent metal cation as cofactor.

The protein localises to the cytoplasm. The catalysed reaction is NAD(+) + ATP = ADP + NADP(+) + H(+). In terms of biological role, involved in the regulation of the intracellular balance of NAD and NADP, and is a key enzyme in the biosynthesis of NADP. Catalyzes specifically the phosphorylation on 2'-hydroxyl of the adenosine moiety of NAD to yield NADP. This chain is NAD kinase, found in Caulobacter vibrioides (strain ATCC 19089 / CIP 103742 / CB 15) (Caulobacter crescentus).